The sequence spans 263 residues: 7beta-hydroxysteroid dehydrogenase (263 aa).

Residues 17–21 (TEGVG), 40–41 (RR), and 66–67 (DF) contribute to the NADP(+) site. Catalysis depends on Tyr-156, which acts as the Proton acceptor. Ser-240 provides a ligand contact to NADP(+).

It belongs to the short-chain dehydrogenases/reductases (SDR) family. Homodimer.

The enzyme catalyses a 7beta-hydroxysteroid + NADP(+) = a 7-oxosteroid + NADPH + H(+). The catalysed reaction is 7-oxolithocholate + NADPH + H(+) = ursodeoxycholate + NADP(+). It carries out the reaction 7beta-hydroxy-3,12-dioxo-5beta-cholan-24-oate + NADP(+) = dehydrocholate + NADPH + H(+). It catalyses the reaction ursocholate + NADP(+) = 3alpha,12alpha-dihydroxy-7-oxo-5beta-cholanate + NADPH + H(+). 7beta-hydroxysteroid dehydrogenase that catalyzes the reduction of the 7-oxo group of 7-oxo-lithocholate (7-oxo-LCA), to yield ursodeoxycholate (UDCA). As C.aerofaciens is an intestinal bacterium, this enzyme probably contributes to the formation of UDCA in the human colon. UDCA is regarded as a chemopreventive beneficial secondary bile acid due to its low hydrophobicity; it protects hepatocytes and bile duct epithelial cells against necrosis and apoptosis induced by more hydrophobic secondary bile acids like deoxycholate (DCA). This enzyme is also able to catalyze the reverse reaction, i.e. the oxidation of the 7beta-hydroxy group of UDCA to 7-oxo-LCA. To a lesser extent, is also active on the taurine- and glycine-conjugates of ursodeoxycholate. It is specific for NADPH/NADP(+) as the electron acceptor/donor since it is not active with NADH/NAD(+). In the presence of NADPH, 7beta-HSDH can also reduce dehydrocholate. And is also able to oxidize ursocholate. The chain is 7beta-hydroxysteroid dehydrogenase from Collinsella aerofaciens (strain ATCC 25986 / DSM 3979 / JCM 10188 / KCTC 3647 / NCTC 11838 / VPI 1003).